A 452-amino-acid chain; its full sequence is Bifunctional protein GlmU (452 aa).

The tract at residues Met1 to Arg233 is pyrophosphorylase. UDP-N-acetyl-alpha-D-glucosamine is bound by residues Leu11–Gly14, Lys25, Gln76, Gly81–Thr82, Tyr104–Asp106, Gly144, Glu159, Asn174, and Asn231. Residue Asp106 participates in Mg(2+) binding. Asn231 contributes to the Mg(2+) binding site. The tract at residues Ala234 to Asp254 is linker. The N-acetyltransferase stretch occupies residues Gly255–Lys452. 2 residues coordinate UDP-N-acetyl-alpha-D-glucosamine: Arg320 and Lys338. Residue His350 is the Proton acceptor of the active site. 2 residues coordinate UDP-N-acetyl-alpha-D-glucosamine: Tyr353 and Asn364. Acetyl-CoA is bound by residues Ala367, Asn373–Tyr374, Ser392, Ala410, and Arg427.

This sequence in the N-terminal section; belongs to the N-acetylglucosamine-1-phosphate uridyltransferase family. In the C-terminal section; belongs to the transferase hexapeptide repeat family. As to quaternary structure, homotrimer. Mg(2+) serves as cofactor.

The protein resides in the cytoplasm. It catalyses the reaction alpha-D-glucosamine 1-phosphate + acetyl-CoA = N-acetyl-alpha-D-glucosamine 1-phosphate + CoA + H(+). The catalysed reaction is N-acetyl-alpha-D-glucosamine 1-phosphate + UTP + H(+) = UDP-N-acetyl-alpha-D-glucosamine + diphosphate. It functions in the pathway nucleotide-sugar biosynthesis; UDP-N-acetyl-alpha-D-glucosamine biosynthesis; N-acetyl-alpha-D-glucosamine 1-phosphate from alpha-D-glucosamine 6-phosphate (route II): step 2/2. It participates in nucleotide-sugar biosynthesis; UDP-N-acetyl-alpha-D-glucosamine biosynthesis; UDP-N-acetyl-alpha-D-glucosamine from N-acetyl-alpha-D-glucosamine 1-phosphate: step 1/1. The protein operates within bacterial outer membrane biogenesis; LPS lipid A biosynthesis. In terms of biological role, catalyzes the last two sequential reactions in the de novo biosynthetic pathway for UDP-N-acetylglucosamine (UDP-GlcNAc). The C-terminal domain catalyzes the transfer of acetyl group from acetyl coenzyme A to glucosamine-1-phosphate (GlcN-1-P) to produce N-acetylglucosamine-1-phosphate (GlcNAc-1-P), which is converted into UDP-GlcNAc by the transfer of uridine 5-monophosphate (from uridine 5-triphosphate), a reaction catalyzed by the N-terminal domain. The polypeptide is Bifunctional protein GlmU (Rhizorhabdus wittichii (strain DSM 6014 / CCUG 31198 / JCM 15750 / NBRC 105917 / EY 4224 / RW1) (Sphingomonas wittichii)).